A 279-amino-acid chain; its full sequence is Inorganic pyrophosphatase 2 (279 aa).

D12 acts as the Nucleophile in catalysis. 2 residues coordinate Mg(2+): D12 and D14. Catalysis depends on D14, which acts as the Proton donor. Substrate contacts are provided by D23 and D98. D182 contributes to the Mg(2+) binding site.

This sequence belongs to the HAD-like hydrolase superfamily. As to quaternary structure, tetramer. It depends on Mg(2+) as a cofactor.

The enzyme catalyses diphosphate + H2O = 2 phosphate + H(+). Catalyzes the specific cleavage of pyrophosphate. The polypeptide is Inorganic pyrophosphatase 2 (Arabidopsis thaliana (Mouse-ear cress)).